Reading from the N-terminus, the 227-residue chain is UPF0173 metal-dependent hydrolase Tlet_1100 (227 aa).

This sequence belongs to the UPF0173 family.

The chain is UPF0173 metal-dependent hydrolase Tlet_1100 from Pseudothermotoga lettingae (strain ATCC BAA-301 / DSM 14385 / NBRC 107922 / TMO) (Thermotoga lettingae).